We begin with the raw amino-acid sequence, 96 residues long: Transcription and mRNA export factor ENY2 (96 aa).

Belongs to the ENY2 family. As to quaternary structure, component of the nuclear pore complex (NPC)-associated TREX-2 complex (transcription and export complex 2). Component of the SAGA transcription coactivator-HAT complex. Within the SAGA complex, participates in a subcomplex of SAGA called the DUB module (deubiquitination module).

It localises to the nucleus. Its subcellular location is the nucleoplasm. Functionally, involved in mRNA export coupled transcription activation by association with both the TREX-2 and the SAGA complexes. The transcription regulatory histone acetylation (HAT) complex SAGA is a multiprotein complex that activates transcription by remodeling chromatin and mediating histone acetylation and deubiquitination. Within the SAGA complex, participates in a subcomplex that specifically deubiquitinates histones. The SAGA complex is recruited to specific gene promoters by activators, where it is required for transcription. The TREX-2 complex functions in docking export-competent ribonucleoprotein particles (mRNPs) to the nuclear entrance of the nuclear pore complex (nuclear basket). TREX-2 participates in mRNA export and accurate chromatin positioning in the nucleus by tethering genes to the nuclear periphery. The chain is Transcription and mRNA export factor ENY2 from Taeniopygia guttata (Zebra finch).